Consider the following 290-residue polypeptide: uncharacterized protein (290 aa).

This is an uncharacterized protein from Lepidoptera (butterflies and moths).